We begin with the raw amino-acid sequence, 132 residues long: UPF0299 membrane protein YohJ (132 aa).

A run of 4 helical transmembrane segments spans residues 7-27 (IIWQYLRAFVLIYACLYAGIF), 31-51 (LLPVTIPGSIIGMLILFVLLA), 63-83 (GCYVLIRYMALLFVPIGVGVM), and 93-113 (FGPVVVSCAVSTLVVFLVVSW).

The protein belongs to the UPF0299 family.

It is found in the cell inner membrane. This Shigella boydii serotype 4 (strain Sb227) protein is UPF0299 membrane protein YohJ.